A 458-amino-acid polypeptide reads, in one-letter code: Argininosuccinate lyase (458 aa).

This sequence belongs to the lyase 1 family. Argininosuccinate lyase subfamily.

The protein localises to the cytoplasm. It carries out the reaction 2-(N(omega)-L-arginino)succinate = fumarate + L-arginine. The protein operates within amino-acid biosynthesis; L-arginine biosynthesis; L-arginine from L-ornithine and carbamoyl phosphate: step 3/3. In Salmonella newport (strain SL254), this protein is Argininosuccinate lyase.